Consider the following 338-residue polypeptide: Beta-ketoacyl-[acyl-carrier-protein] synthase III (338 aa).

Catalysis depends on residues Cys119 and His261. The interval 262–266 is ACP-binding; sequence QANQR. Asn291 is a catalytic residue.

The protein belongs to the thiolase-like superfamily. FabH family. As to quaternary structure, homodimer.

It is found in the cytoplasm. The catalysed reaction is malonyl-[ACP] + acetyl-CoA + H(+) = 3-oxobutanoyl-[ACP] + CO2 + CoA. It functions in the pathway lipid metabolism; fatty acid biosynthesis. Catalyzes the condensation reaction of fatty acid synthesis by the addition to an acyl acceptor of two carbons from malonyl-ACP. Catalyzes the first condensation reaction which initiates fatty acid synthesis and may therefore play a role in governing the total rate of fatty acid production. Possesses both acetoacetyl-ACP synthase and acetyl transacylase activities. Its substrate specificity determines the biosynthesis of branched-chain and/or straight-chain of fatty acids. This is Beta-ketoacyl-[acyl-carrier-protein] synthase III from Prochlorococcus marinus (strain SARG / CCMP1375 / SS120).